Consider the following 247-residue polypeptide: Probable transcriptional regulatory protein HRM2_04000 (247 aa).

It belongs to the TACO1 family.

Its subcellular location is the cytoplasm. This chain is Probable transcriptional regulatory protein HRM2_04000, found in Desulforapulum autotrophicum (strain ATCC 43914 / DSM 3382 / VKM B-1955 / HRM2) (Desulfobacterium autotrophicum).